Here is a 385-residue protein sequence, read N- to C-terminus: 1-deoxy-D-xylulose 5-phosphate reductoisomerase (385 aa).

The NADPH site is built by S10, G11, S12, I13, G36, N38, and N124. Residue K125 participates in 1-deoxy-D-xylulose 5-phosphate binding. E126 lines the NADPH pocket. D150 provides a ligand contact to Mn(2+). 1-deoxy-D-xylulose 5-phosphate contacts are provided by S151, E152, S176, and H198. E152 lines the Mn(2+) pocket. G204 contributes to the NADPH binding site. Residues S211, N216, K217, and E220 each contribute to the 1-deoxy-D-xylulose 5-phosphate site. Mn(2+) is bound at residue E220.

The protein belongs to the DXR family. Requires Mg(2+) as cofactor. The cofactor is Mn(2+).

It carries out the reaction 2-C-methyl-D-erythritol 4-phosphate + NADP(+) = 1-deoxy-D-xylulose 5-phosphate + NADPH + H(+). It functions in the pathway isoprenoid biosynthesis; isopentenyl diphosphate biosynthesis via DXP pathway; isopentenyl diphosphate from 1-deoxy-D-xylulose 5-phosphate: step 1/6. Its function is as follows. Catalyzes the NADPH-dependent rearrangement and reduction of 1-deoxy-D-xylulose-5-phosphate (DXP) to 2-C-methyl-D-erythritol 4-phosphate (MEP). This Endomicrobium trichonymphae protein is 1-deoxy-D-xylulose 5-phosphate reductoisomerase.